The sequence spans 535 residues: Succinate-semialdehyde dehydrogenase, mitochondrial (535 aa).

A mitochondrion-targeting transit peptide spans 1–47 (MATCIWLRSCGARRLGSTFPGCRLRPRAGGLVPASGPAPGPAQLRCY). Lys-126 carries the N6-acetyllysine; alternate modification. Lys-126 is subject to N6-succinyllysine; alternate. Lys-135 and Lys-184 each carry N6-succinyllysine. 202–204 (TPW) serves as a coordination point for NAD(+). Arg-213 contacts substrate. Position 228–231 (228–231 (KPAE)) interacts with NAD(+). Lys-265 is modified (N6-acetyllysine; alternate). Lys-265 is subject to N6-succinyllysine; alternate. NAD(+) contacts are provided by residues 284-289 (GSTTTG) and Glu-306. Residue Glu-306 is the Proton acceptor of the active site. Arg-334 serves as a coordination point for substrate. Cys-340 functions as the Nucleophile in the catalytic mechanism. Cys-340 and Cys-342 are joined by a disulfide. At Lys-365 the chain carries N6-acetyllysine. At Lys-402 the chain carries N6-succinyllysine. Lys-411 is subject to N6-acetyllysine. 438–440 (ETF) provides a ligand contact to NAD(+). Residue Ser-498 coordinates substrate. At Ser-499 the chain carries Phosphoserine.

Belongs to the aldehyde dehydrogenase family. In terms of assembly, homotetramer. Brain, pancreas, heart, liver, skeletal muscle and kidney. Lower in placenta.

The protein resides in the mitochondrion. The catalysed reaction is succinate semialdehyde + NAD(+) + H2O = succinate + NADH + 2 H(+). It functions in the pathway amino-acid degradation; 4-aminobutanoate degradation. Its activity is regulated as follows. Redox-regulated. Inhibited under oxydizing conditions. Inhibited by hydrogen peroxide H(2)O(2). Functionally, catalyzes one step in the degradation of the inhibitory neurotransmitter gamma-aminobutyric acid (GABA). In Homo sapiens (Human), this protein is Succinate-semialdehyde dehydrogenase, mitochondrial.